Consider the following 846-residue polypeptide: Disks large-associated protein 5 (846 aa).

The residue at position 67 (Ser-67) is a Phosphoserine; by CDK1. Residues 90–120 are a coiled coil; that stretch reads RKQMLQKYKEEKQLQKLKEQREKAKRGIFKV. A disordered region spans residues 153–284; the sequence is TRSKAKDQME…TNATSGMNPD (132 aa). 2 stretches are compositionally biased toward basic and acidic residues: residues 156 to 174 and 182 to 194; these read KAKDQMEQTKIDNESDVRA and TSEKKVSDKEKKV. A Phosphoserine modification is found at Ser-202. The span at 203–225 shows a compositional bias: polar residues; the sequence is LRMTRSATQAAKQVPRTVSSTTA. Over residues 250 to 266 the composition is skewed to basic and acidic residues; that stretch reads KNVETKPDKGISCKVDS. Residues 269–281 show a composition bias toward polar residues; sequence NTLNSQTNATSGM. Position 326 is a phosphothreonine (Thr-326). Thr-329 is subject to Phosphothreonine; by CDK1. Thr-338 carries the phosphothreonine modification. Lys-347 participates in a covalent cross-link: Glycyl lysine isopeptide (Lys-Gly) (interchain with G-Cter in SUMO2). Phosphothreonine; by CDK1 is present on residues Thr-401 and Thr-402. Ser-618 is subject to Phosphoserine; by CDK1. Residue Ser-627 is modified to Phosphoserine; by AURKA. The span at 628–671 shows a compositional bias: polar residues; it reads VSSEGPSQRLGTPKSVNKAVSQSRNEMGIPQQTTSPENAGPQNT. Residues 628-674 form a disordered region; that stretch reads VSSEGPSQRLGTPKSVNKAVSQSRNEMGIPQQTTSPENAGPQNTKSE. Phosphoserine occurs at positions 629 and 634. Thr-639 is subject to Phosphothreonine; by CDK1. Ser-642 carries the post-translational modification Phosphoserine; by CDK1. Ser-662 carries the post-translational modification Phosphoserine. 2 positions are modified to phosphoserine; by AURKA: Ser-725 and Ser-757. Thr-759 is subject to Phosphothreonine; by CDK1. A phosphoserine mark is found at Ser-774 and Ser-777. Thr-784 is modified (phosphothreonine). Ser-806 and Ser-812 each carry phosphoserine. Ser-830 bears the Phosphoserine; by AURKA mark. At Ser-839 the chain carries Phosphoserine; by CDK1.

This sequence belongs to the SAPAP family. In terms of assembly, interacts with CDK1. Interacts with the C-terminal proline-rich region of FBXO7. Recruited by FBXO7 to a SCF (SKP1-CUL1-F-box) protein complex in a CDK1/Cyclin B-phosphorylation dependent manner. Interacts with CDH1. Post-translationally, ubiquitinated, leading to its degradation. In terms of processing, decreased phosphorylation levels are associated with the differentiation of intestinal epithelial cells. As to expression, abundantly expressed in fetal liver. Expressed at lower levels in bone marrow, testis, colon, and placenta.

The protein resides in the nucleus. Its subcellular location is the cytoplasm. The protein localises to the cytoskeleton. It is found in the spindle. Its function is as follows. Potential cell cycle regulator that may play a role in carcinogenesis of cancer cells. Mitotic phosphoprotein regulated by the ubiquitin-proteasome pathway. Key regulator of adherens junction integrity and differentiation that may be involved in CDH1-mediated adhesion and signaling in epithelial cells. This is Disks large-associated protein 5 (DLGAP5) from Homo sapiens (Human).